Here is a 515-residue protein sequence, read N- to C-terminus: Protein NRT1/ PTR FAMILY 4.1 (515 aa).

12 consecutive transmembrane segments (helical) span residues 24–44 (GIKA…VFLA), 71–91 (FVGT…SFLT), 93–113 (FAAF…LTLQ), 134–154 (VLFT…GSLP), 168–188 (LISG…FLAV), 204–224 (FTIS…GCPM), 298–318 (FLAL…VAQM), 339–359 (IPVA…LALY), 381–401 (IGYG…VEVK), 413–433 (ISVF…MLTV), 461–481 (AMGF…TGWL), and 492–512 (LFYL…IFWA).

The protein belongs to the major facilitator superfamily. Proton-dependent oligopeptide transporter (POT/PTR) (TC 2.A.17) family. As to expression, expressed in siliques and flowers.

It is found in the membrane. Involved in (+) and (-)-abscisic acid transport (ABA) and in gibberellin import. The protein is Protein NRT1/ PTR FAMILY 4.1 (NPF4.1) of Arabidopsis thaliana (Mouse-ear cress).